Reading from the N-terminus, the 298-residue chain is Acetate permease A (298 aa).

The tract at residues 1-43 (MSAEQNHGLEKDVGGPAAPAAAAPNAPAAAPGAPPAGMSAEEH) is disordered. A compositionally biased stretch (low complexity) spans 14–37 (GGPAAPAAAAPNAPAAAPGAPPAG). 6 helical membrane passes run 86 to 106 (APLG…INMG), 115 to 135 (IVIA…GMWE), 146 to 166 (ALSS…PGGF), 185 to 205 (SFGL…FCTL), 210 to 230 (AFFL…VGYI), and 245 to 265 (AGGF…LAGI).

Belongs to the acetate uptake transporter (AceTr) (TC 2.A.96) family.

It localises to the cell membrane. Its subcellular location is the vacuole membrane. Its function is as follows. High affinity monocarboxylate transporter (MCT) involved in acetate uptake. Unlike other activities involved in acetate utilization, acpA is dispensable for growth on the acetate precursor ethanol. This chain is Acetate permease A, found in Emericella nidulans (strain FGSC A4 / ATCC 38163 / CBS 112.46 / NRRL 194 / M139) (Aspergillus nidulans).